A 371-amino-acid chain; its full sequence is Chemerin-like receptor 1 (371 aa).

The Extracellular segment spans residues 1–39 (MEYDAYNDSGIYDDEYSDGFGYFVDLEEASPWEAKVAPV). Residue Asn-7 is glycosylated (N-linked (GlcNAc...) asparagine). The helical transmembrane segment at 40-62 (FLVVIYSLVCFLGLLGNGLVIVI) threads the bilayer. Residues 63–73 (ATFKMKKTVNT) lie on the Cytoplasmic side of the membrane. Residues 74–95 (VWFVNLAVADFLFNIFLPMHIT) traverse the membrane as a helical segment. At 96-112 (YAAMDYHWVFGKAMCKI) the chain is on the extracellular side. A disulfide bond links Cys-110 and Cys-187. The helical transmembrane segment at 113-133 (SNFLLSHNMYTSVFLLTVISF) threads the bilayer. At 134–152 (DRCISVLLPVWSQNHRSIR) the chain is on the cytoplasmic side. The chain crosses the membrane as a helical span at residues 153–174 (LAYMTCSAVWVLAFFLSSPSLV). Residues 175–222 (FRDTANIHGKITCFNNFSLAAPESSPHPAHSQVVSTGYSRHVAVTVTR) are Extracellular-facing. Asn-190 carries N-linked (GlcNAc...) asparagine glycosylation. Residues 223–243 (FLCGFLIPVFIITACYLTIVF) form a helical membrane-spanning segment. The Cytoplasmic segment spans residues 244 to 259 (KLQRNRLAKNKKPFKI). Residues 260-280 (IITIIITFFLCWCPYHTLYLL) traverse the membrane as a helical segment. The Extracellular segment spans residues 281–298 (ELHHTAVPSSVFSLGLPL). A helical membrane pass occupies residues 299 to 318 (ATAVAIANSCMNPILYVFMG). The Cytoplasmic segment spans residues 319–371 (HDFRKFKVALFSRLANALSEDTGPSSYPSHRSFTKMSSLNEKASVNEKETSTL). At Ser-337 the chain carries Phosphoserine. Thr-340 bears the Phosphothreonine mark. Phosphoserine occurs at positions 347, 350, and 356. Thr-370 carries the post-translational modification Phosphothreonine.

It belongs to the chemokine-like receptor (CMKLR) family. As to expression, expressed in the differentiated adipocytes (at protein level). Ubiquitous. Highly expressed in adipose tissue and immature plasmacytoid dendritic cells (DCs) and at lower levels in myeloid DCs, macrophages, and NK cells. Expressed on macrophages isolated from different tissues, including peritoneal cavities, pleural cavities and spleen.

It localises to the cell membrane. Receptor for the chemoattractant adipokine chemerin/RARRES2 and for the omega-3 fatty acid derived molecule resolvin E1. Interaction with RARRES2 initiates activation of G proteins G(i)/G(o) and beta-arrestin pathways inducing cellular responses via second messenger pathways such as intracellular calcium mobilization, phosphorylation of MAP kinases MAPK1/MAPK3 (ERK1/2), TYRO3, MAPK14/P38MAPK and PI3K leading to multifunctional effects, like, reduction of immune responses, enhancing of adipogenesis and angionesis. Resolvin E1 down-regulates cytokine production in macrophages by reducing the activation of MAPK1/3 (ERK1/2) and NF-kappa-B. Positively regulates adipogenesis and adipocyte metabolism. The protein is Chemerin-like receptor 1 (Cmklr1) of Mus musculus (Mouse).